A 427-amino-acid chain; its full sequence is 3-isopropylmalate dehydratase large subunit (427 aa).

[4Fe-4S] cluster contacts are provided by Cys308, Cys368, and Cys371.

This sequence belongs to the aconitase/IPM isomerase family. LeuC type 2 subfamily. In terms of assembly, heterodimer of LeuC and LeuD. It depends on [4Fe-4S] cluster as a cofactor.

It carries out the reaction (2R,3S)-3-isopropylmalate = (2S)-2-isopropylmalate. Its pathway is amino-acid biosynthesis; L-leucine biosynthesis; L-leucine from 3-methyl-2-oxobutanoate: step 2/4. Its function is as follows. Catalyzes the isomerization between 2-isopropylmalate and 3-isopropylmalate, via the formation of 2-isopropylmaleate. The protein is 3-isopropylmalate dehydratase large subunit of Geobacter sulfurreducens (strain ATCC 51573 / DSM 12127 / PCA).